Consider the following 337-residue polypeptide: GDP-mannose transporter 1 (337 aa).

Over 1–16 (MSELKTGHAGHNPWAS) the chain is Cytoplasmic. Residues 17 to 37 (VANSGPISILSYCGSSILMTV) form a helical membrane-spanning segment. Residues 38-51 (TNKFVVNLKDFNMN) lie on the Lumenal side of the membrane. The chain crosses the membrane as a helical span at residues 52–72 (FVMLFVQSLVCTITLIILRIL). At 73–92 (GYAKFRSLNKTDAKNWFPIS) the chain is on the cytoplasmic side. A helical membrane pass occupies residues 93 to 113 (FLLVLMIYTSSKALQYLAVPI). Residues 114 to 119 (YTIFKN) lie on the Lumenal side of the membrane. Residue N119 is glycosylated (N-linked (GlcNAc...) asparagine). A helical transmembrane segment spans residues 120–140 (LTIILIAYGEVLFFGGSVTSM). The Cytoplasmic segment spans residues 141-144 (ELSS). The chain crosses the membrane as a helical span at residues 145 to 165 (FLLMVLSSVVATWGDQQAVAA). The Lumenal segment spans residues 166 to 180 (KAASLAEGAAGAVAS). The helical transmembrane segment at 181–201 (FNPGYFWMFTNCITSALFVLI) threads the bilayer. Residues 202–215 (MRKRIKLTNFKDFD) lie on the Cytoplasmic side of the membrane. The chain crosses the membrane as a helical span at residues 216-236 (TMFYNNVLALPILLLFSFCVE). The Lumenal segment spans residues 237-252 (DWSSVNLTNNFSNDSL). 3 N-linked (GlcNAc...) asparagine glycosylation sites follow: N242, N246, and N249. The helical transmembrane segment at 253-273 (TAMIISGVASVGISYCSGWCV) threads the bilayer. Over 274 to 279 (RVTSST) the chain is Cytoplasmic. A helical transmembrane segment spans residues 280-300 (TYSMVGALNKLPIALSGLIFF). Residues 301–304 (DAPR) lie on the Lumenal side of the membrane. Residues 305–325 (NFLSILSIFIGFLSGIIYAVA) traverse the membrane as a helical segment. Over 326–337 (KQKKQQAQPLRK) the chain is Cytoplasmic.

This sequence belongs to the TPT transporter family. SLC35D subfamily. As to quaternary structure, homooligomer.

It localises to the golgi apparatus membrane. Its subcellular location is the cytoplasmic vesicle membrane. It is found in the endoplasmic reticulum membrane. Involved in the import of GDP-mannose from the cytoplasm into the Golgi lumen. Defective copy causes severe glycosylation defect and abnormal retention of soluble endoplasmic reticulum proteins. Involved in vanadate sensitivity. This is GDP-mannose transporter 1 (VRG4) from Saccharomyces cerevisiae (strain YJM789) (Baker's yeast).